Here is a 647-residue protein sequence, read N- to C-terminus: tRNA 5-methylaminomethyl-2-thiouridine biosynthesis bifunctional protein MnmC (647 aa).

The segment at 1-227 (MLTWKNNLTP…KREMLIGSYS (227 aa)) is tRNA (mnm(5)s(2)U34)-methyltransferase. The FAD-dependent cmnm(5)s(2)U34 oxidoreductase stretch occupies residues 256 to 647 (VGAGIAGTTL…ARFLYRKVRK (392 aa)).

This sequence in the N-terminal section; belongs to the methyltransferase superfamily. tRNA (mnm(5)s(2)U34)-methyltransferase family. The protein in the C-terminal section; belongs to the DAO family. It depends on FAD as a cofactor.

The protein localises to the cytoplasm. It catalyses the reaction 5-aminomethyl-2-thiouridine(34) in tRNA + S-adenosyl-L-methionine = 5-methylaminomethyl-2-thiouridine(34) in tRNA + S-adenosyl-L-homocysteine + H(+). Its function is as follows. Catalyzes the last two steps in the biosynthesis of 5-methylaminomethyl-2-thiouridine (mnm(5)s(2)U) at the wobble position (U34) in tRNA. Catalyzes the FAD-dependent demodification of cmnm(5)s(2)U34 to nm(5)s(2)U34, followed by the transfer of a methyl group from S-adenosyl-L-methionine to nm(5)s(2)U34, to form mnm(5)s(2)U34. This Leptospira interrogans serogroup Icterohaemorrhagiae serovar copenhageni (strain Fiocruz L1-130) protein is tRNA 5-methylaminomethyl-2-thiouridine biosynthesis bifunctional protein MnmC.